The chain runs to 413 residues: Cardiolipin synthase B (413 aa).

PLD phosphodiesterase domains are found at residues 108–135 (VFRR…SSEH) and 285–312 (RRRP…DPLS). Catalysis depends on residues H113, K115, D120, H290, K292, and D297. Residues 388 to 413 (TQVDPPAQPTMETQDRVETENTGVNP) are disordered.

This sequence belongs to the phospholipase D family. Cardiolipin synthase subfamily. ClsB sub-subfamily.

It localises to the cell membrane. It catalyses the reaction 2 a 1,2-diacyl-sn-glycero-3-phospho-(1'-sn-glycerol) = a cardiolipin + glycerol. Its function is as follows. Catalyzes the phosphatidyl group transfer from one phosphatidylglycerol molecule to another to form cardiolipin (CL) (diphosphatidylglycerol) and glycerol. The polypeptide is Cardiolipin synthase B (Shigella flexneri).